The following is a 188-amino-acid chain: Peptidyl-tRNA hydrolase (188 aa).

Tyr14 lines the tRNA pocket. Residue His19 is the Proton acceptor of the active site. Tyr64, Asn66, and Asn112 together coordinate tRNA.

Belongs to the PTH family. In terms of assembly, monomer.

It is found in the cytoplasm. It catalyses the reaction an N-acyl-L-alpha-aminoacyl-tRNA + H2O = an N-acyl-L-amino acid + a tRNA + H(+). In terms of biological role, hydrolyzes ribosome-free peptidyl-tRNAs (with 1 or more amino acids incorporated), which drop off the ribosome during protein synthesis, or as a result of ribosome stalling. Catalyzes the release of premature peptidyl moieties from peptidyl-tRNA molecules trapped in stalled 50S ribosomal subunits, and thus maintains levels of free tRNAs and 50S ribosomes. This chain is Peptidyl-tRNA hydrolase, found in Clostridium perfringens (strain SM101 / Type A).